Consider the following 196-residue polypeptide: MSRYRGPRLKKIRRLGALPGLTRKTPKSGSNLKKKFHSGKKEQYRIRLQEKQKLRFHYGLTERQLLRYVHIAGKAKRSTGQVLLQLLEMRLDNILFRLGMASTIPGARQLVNHRHILVNGRIVDIPSFRCKPRDIITTKDNQRSKRLIQNSIASSDPGKLPKHLTIDTLQYKGLVKKILDRKWVGLKINELLVVEY.

The interval 17-36 (ALPGLTRKTPKSGSNLKKKF) is disordered. In terms of domain architecture, S4 RNA-binding spans 89 to 150 (MRLDNILFRL…NQRSKRLIQN (62 aa)).

It belongs to the universal ribosomal protein uS4 family. In terms of assembly, part of the 30S ribosomal subunit. Contacts protein S5. The interaction surface between S4 and S5 is involved in control of translational fidelity.

The protein localises to the plastid. It localises to the chloroplast. One of the primary rRNA binding proteins, it binds directly to 16S rRNA where it nucleates assembly of the body of the 30S subunit. Functionally, with S5 and S12 plays an important role in translational accuracy. In Phyllostachys flexuosa (Drooping timber bamboo), this protein is Small ribosomal subunit protein uS4c (rps4).